We begin with the raw amino-acid sequence, 103 residues long: UPF0145 protein RSKD131_1772 (103 aa).

This sequence belongs to the UPF0145 family.

The chain is UPF0145 protein RSKD131_1772 from Cereibacter sphaeroides (strain KD131 / KCTC 12085) (Rhodobacter sphaeroides).